Consider the following 291-residue polypeptide: 4-diphosphocytidyl-2-C-methyl-D-erythritol kinase (291 aa).

Lysine 10 is a catalytic residue. 99–109 (PMGGGLGGGSS) contacts ATP. Aspartate 141 is a catalytic residue.

It belongs to the GHMP kinase family. IspE subfamily. Homodimer.

It carries out the reaction 4-CDP-2-C-methyl-D-erythritol + ATP = 4-CDP-2-C-methyl-D-erythritol 2-phosphate + ADP + H(+). The protein operates within isoprenoid biosynthesis; isopentenyl diphosphate biosynthesis via DXP pathway; isopentenyl diphosphate from 1-deoxy-D-xylulose 5-phosphate: step 3/6. Its function is as follows. Catalyzes the phosphorylation of the position 2 hydroxy group of 4-diphosphocytidyl-2C-methyl-D-erythritol. This Photorhabdus laumondii subsp. laumondii (strain DSM 15139 / CIP 105565 / TT01) (Photorhabdus luminescens subsp. laumondii) protein is 4-diphosphocytidyl-2-C-methyl-D-erythritol kinase.